A 217-amino-acid polypeptide reads, in one-letter code: Ras-related protein RGP2 (217 aa).

GTP contacts are provided by residues 19-26, 67-71, and 125-128; these read GDSGVGKS, DTAGQ, and NKSD. Residues Cys-214 and Cys-215 are each lipidated (S-geranylgeranyl cysteine).

The protein belongs to the small GTPase superfamily. Rab family.

The protein localises to the cell membrane. This is Ras-related protein RGP2 (RGP2) from Oryza sativa subsp. japonica (Rice).